The primary structure comprises 227 residues: Ribose-5-phosphate isomerase A (227 aa).

Residues 26–29 (TGST), 82–85 (DGAD), and 95–98 (KGGG) contribute to the substrate site. The active-site Proton acceptor is the Glu-104. Substrate is bound at residue Lys-122.

Belongs to the ribose 5-phosphate isomerase family. In terms of assembly, homodimer.

The enzyme catalyses aldehydo-D-ribose 5-phosphate = D-ribulose 5-phosphate. Its pathway is carbohydrate degradation; pentose phosphate pathway; D-ribose 5-phosphate from D-ribulose 5-phosphate (non-oxidative stage): step 1/1. In terms of biological role, catalyzes the reversible conversion of ribose-5-phosphate to ribulose 5-phosphate. The polypeptide is Ribose-5-phosphate isomerase A (Streptococcus pyogenes serotype M28 (strain MGAS6180)).